A 753-amino-acid polypeptide reads, in one-letter code: 5-methyltetrahydropteroyltriglutamate--homocysteine methyltransferase (753 aa).

5-methyltetrahydropteroyltri-L-glutamate-binding positions include 17-20 (RELK) and K117. L-homocysteine contacts are provided by residues 431–433 (IGS) and E484. L-methionine contacts are provided by residues 431–433 (IGS) and E484. 5-methyltetrahydropteroyltri-L-glutamate contacts are provided by residues 515–516 (RC) and W561. D599 contributes to the L-homocysteine binding site. L-methionine is bound at residue D599. Residue E605 coordinates 5-methyltetrahydropteroyltri-L-glutamate. Zn(2+) is bound by residues H641, C643, and E665. The active-site Proton donor is the H694. C726 is a binding site for Zn(2+).

This sequence belongs to the vitamin-B12 independent methionine synthase family. Zn(2+) is required as a cofactor.

It catalyses the reaction 5-methyltetrahydropteroyltri-L-glutamate + L-homocysteine = tetrahydropteroyltri-L-glutamate + L-methionine. It functions in the pathway amino-acid biosynthesis; L-methionine biosynthesis via de novo pathway; L-methionine from L-homocysteine (MetE route): step 1/1. Functionally, catalyzes the transfer of a methyl group from 5-methyltetrahydrofolate to homocysteine resulting in methionine formation. This Citrobacter koseri (strain ATCC BAA-895 / CDC 4225-83 / SGSC4696) protein is 5-methyltetrahydropteroyltriglutamate--homocysteine methyltransferase.